The following is a 56-amino-acid chain: Ferredoxin (56 aa).

4Fe-4S ferredoxin-type domains are found at residues 2–28 (AYKILDTCVSCGACAAECPVDAISQGD) and 29–56 (TQFVIDADTCIDCGNCANVCPVGAPVQE). Positions 9, 12, 15, 19, 38, 41, 44, and 48 each coordinate [4Fe-4S] cluster.

The cofactor is [4Fe-4S] cluster.

Functionally, ferredoxins are iron-sulfur proteins that transfer electrons in a wide variety of metabolic reactions. The protein is Ferredoxin (fer) of Clostridium perfringens (strain 13 / Type A).